A 199-amino-acid chain; its full sequence is Recombination protein RecR (199 aa).

The C4-type zinc-finger motif lies at 58-73 (CLVCGNVTGSDICPIC). Positions 81 to 176 (GEICVVTDVA…AVTGLAQGVP (96 aa)) constitute a Toprim domain.

It belongs to the RecR family.

May play a role in DNA repair. It seems to be involved in an RecBC-independent recombinational process of DNA repair. It may act with RecF and RecO. In Paracoccus denitrificans (strain Pd 1222), this protein is Recombination protein RecR.